The primary structure comprises 280 residues: Homeobox protein SMOX-1 (280 aa).

Residues 61–88 (PNNNSFQLNTTNDSNNNNTTNNGNDSRS) form a disordered region. Positions 69-85 (NTTNDSNNNNTTNNGND) are enriched in low complexity. An Antp-type hexapeptide motif is present at residues 214–219 (VYPWMN). A DNA-binding region (homeobox) is located at residues 229–280 (QKRTRQTYTRYQTLELEKEFHFNKYLTRRRRIEIAHTLTLTERQIKIWFQNR).

It belongs to the Antp homeobox family.

The protein resides in the nucleus. The polypeptide is Homeobox protein SMOX-1 (SMOX-1) (Schistosoma mansoni (Blood fluke)).